Here is a 376-residue protein sequence, read N- to C-terminus: 4-hydroxy-3-methylbut-2-en-1-yl diphosphate synthase (flavodoxin) (376 aa).

[4Fe-4S] cluster-binding residues include Cys-270, Cys-273, Cys-305, and Glu-312.

The protein belongs to the IspG family. It depends on [4Fe-4S] cluster as a cofactor.

The catalysed reaction is (2E)-4-hydroxy-3-methylbut-2-enyl diphosphate + oxidized [flavodoxin] + H2O + 2 H(+) = 2-C-methyl-D-erythritol 2,4-cyclic diphosphate + reduced [flavodoxin]. It functions in the pathway isoprenoid biosynthesis; isopentenyl diphosphate biosynthesis via DXP pathway; isopentenyl diphosphate from 1-deoxy-D-xylulose 5-phosphate: step 5/6. Its function is as follows. Converts 2C-methyl-D-erythritol 2,4-cyclodiphosphate (ME-2,4cPP) into 1-hydroxy-2-methyl-2-(E)-butenyl 4-diphosphate. This chain is 4-hydroxy-3-methylbut-2-en-1-yl diphosphate synthase (flavodoxin), found in Colwellia psychrerythraea (strain 34H / ATCC BAA-681) (Vibrio psychroerythus).